An 86-amino-acid chain; its full sequence is Small ribosomal subunit protein uS15 (86 aa).

The protein belongs to the universal ribosomal protein uS15 family. As to quaternary structure, part of the 30S ribosomal subunit. Forms a bridge to the 50S subunit in the 70S ribosome, contacting the 23S rRNA.

Functionally, one of the primary rRNA binding proteins, it binds directly to 16S rRNA where it helps nucleate assembly of the platform of the 30S subunit by binding and bridging several RNA helices of the 16S rRNA. Forms an intersubunit bridge (bridge B4) with the 23S rRNA of the 50S subunit in the ribosome. The protein is Small ribosomal subunit protein uS15 of Mycoplasma genitalium (strain ATCC 33530 / DSM 19775 / NCTC 10195 / G37) (Mycoplasmoides genitalium).